The sequence spans 209 residues: ADP-ribose pyrophosphatase (209 aa).

Substrate contacts are provided by residues 28–29 (FF), 51–52 (RE), arginine 56, and arginine 79. A Nudix hydrolase domain is found at 55–193 (ERGHAAVLLP…KIDNAASVIA (139 aa)). Alanine 96 serves as a coordination point for Mg(2+). A Nudix box motif is present at residues 97–118 (GMIEEGESVEDVARREAIEEAG). Methionine 98 is a binding site for substrate. Positions 112 and 116 each coordinate Mg(2+). Residues 133–135 (SPG) and glutamate 139 each bind substrate. The active-site Proton acceptor is glutamate 162. Position 164 (glutamate 164) interacts with Mg(2+).

The protein belongs to the Nudix hydrolase family. NudF subfamily. Homodimer. The cofactor is Mg(2+).

It carries out the reaction ADP-D-ribose + H2O = D-ribose 5-phosphate + AMP + 2 H(+). Its activity is regulated as follows. Inhibited by phosphorylated compounds such as AMP, ADP, ATP, 3-phosphoglyceric acid and PPi. Not inhibited by orthophosphate. Activity is high in cells grown in low glucose concentrations and decreases dramatically as glucose concentration increases. Acts on ADP-mannose and ADP-glucose as well as ADP-ribose. Prevents glycogen biosynthesis. The reaction catalyzed by this enzyme is a limiting step of the gluconeogenic process. The sequence is that of ADP-ribose pyrophosphatase (nudF) from Escherichia coli O157:H7.